An 852-amino-acid polypeptide reads, in one-letter code: DNA repair protein rhp54 (852 aa).

2 consecutive short sequence motifs (nuclear localization signal) follow at residues 35-51 (KKFK…RKEL) and 178-181 (KRKK). Residues 187-205 (NRKGKKEISDSEPESDHDS) are compositionally biased toward basic and acidic residues. The tract at residues 187–208 (NRKGKKEISDSEPESDHDSCVS) is disordered. One can recognise a Helicase ATP-binding domain in the interval 281–459 (GRIDRCANGC…FSLLNFANPG (179 aa)). Position 294 to 301 (294 to 301 (DEMGLGKT)) interacts with ATP. Positions 410–413 (DEGH) match the DEGH box motif. Residues 614–767 (VLERMLYQIK…CVVDEAQDVE (154 aa)) form the Helicase C-terminal domain.

Belongs to the SNF2/RAD54 helicase family. Homohexamer. Interacts with rhp51.

Its subcellular location is the nucleus. The enzyme catalyses ATP + H2O = ADP + phosphate + H(+). In terms of biological role, plays an essential role in homologous recombination (HR) which is a major pathway for repairing DNA double-strand breaks (DSBs), single-stranded DNA (ssDNA) gaps, and stalled or collapsed replication forks. Acts as a molecular motor during the homology search and guides RAD51 ssDNA along a donor dsDNA thereby changing the homology search from the diffusion-based mechanism to a motor-guided mechanism. Plays also an essential role in RAD51-mediated synaptic complex formation which consists of three strands encased in a protein filament formed once homology is recognized. Once DNA strand exchange occured, dissociates RAD51 from nucleoprotein filaments formed on dsDNA. The chain is DNA repair protein rhp54 (rhp54) from Schizosaccharomyces pombe (strain 972 / ATCC 24843) (Fission yeast).